Consider the following 304-residue polypeptide: ULP1-interacting protein 4 (304 aa).

The segment at Asp-72 to Thr-269 is disordered. Residues Glu-73–Asn-83 show a composition bias toward basic and acidic residues. The segment covering Thr-129–Gly-149 has biased composition (polar residues). At Ser-140 the chain carries Phosphoserine. Residues Glu-155–Glu-183 are compositionally biased toward basic and acidic residues. Phosphoserine is present on residues Ser-185 and Ser-205.

In terms of assembly, interacts with ULP1.

It is found in the endoplasmic reticulum membrane. It localises to the mitochondrion outer membrane. Its subcellular location is the nucleus envelope. This Saccharomyces cerevisiae (strain ATCC 204508 / S288c) (Baker's yeast) protein is ULP1-interacting protein 4 (UIP4).